Consider the following 306-residue polypeptide: Probable rRNA-processing protein EBP2 (306 aa).

M1 is subject to N-acetylmethionine. Disordered stretches follow at residues 1–20 (MDTP…LVTD) and 77–99 (VPEI…VDPE). T3 is subject to Phosphothreonine. Phosphoserine is present on residues S7, S9, S11, S13, and S16. A Glycyl lysine isopeptide (Lys-Gly) (interchain with G-Cter in SUMO2) cross-link involves residue K94. Positions 138-169 (AEMAKSDLQMQKIRQKLQTKQAAMERSEKAKQ) form a coiled coil. Glycyl lysine isopeptide (Lys-Gly) (interchain with G-Cter in SUMO2) cross-links involve residues K179 and K218. Residues 213-306 (LEGDQKPLAQ…TREKMKNRTH (94 aa)) form a disordered region. 2 positions are modified to phosphoserine: S264 and S270. Positions 274 to 306 (KTAHGRGLKRPGKKGSNKRPGKRTREKMKNRTH) are enriched in basic residues.

This sequence belongs to the EBP2 family. In terms of assembly, specifically interacts with EBV EBNA1. The EBNA1-EBP2 interaction is important for the stable segregation of EBV episomes during cell division. Interacts with WDR46. As to expression, ubiquitous.

The protein localises to the nucleus. Its subcellular location is the nucleolus. Functionally, required for the processing of the 27S pre-rRNA. The sequence is that of Probable rRNA-processing protein EBP2 (EBNA1BP2) from Homo sapiens (Human).